The following is a 72-amino-acid chain: UPF0270 protein KPK_0377 (72 aa).

It belongs to the UPF0270 family.

The polypeptide is UPF0270 protein KPK_0377 (Klebsiella pneumoniae (strain 342)).